Reading from the N-terminus, the 121-residue chain is Small ribosomal subunit protein uS13 (121 aa).

Residues 92 to 121 (RKGLPMRGQRTRTNARTRKGPRRAAQALKK) form a disordered region.

This sequence belongs to the universal ribosomal protein uS13 family. In terms of assembly, part of the 30S ribosomal subunit. Forms a loose heterodimer with protein S19. Forms two bridges to the 50S subunit in the 70S ribosome.

Functionally, located at the top of the head of the 30S subunit, it contacts several helices of the 16S rRNA. In the 70S ribosome it contacts the 23S rRNA (bridge B1a) and protein L5 of the 50S subunit (bridge B1b), connecting the 2 subunits; these bridges are implicated in subunit movement. Contacts the tRNAs in the A and P-sites. The sequence is that of Small ribosomal subunit protein uS13 from Burkholderia thailandensis (strain ATCC 700388 / DSM 13276 / CCUG 48851 / CIP 106301 / E264).